Reading from the N-terminus, the 221-residue chain is Endo-1,4-beta-xylanase 11A (221 aa).

Residues 1-17 (MVSFTTLLTAVATAVSA) form the signal peptide. The region spanning 28–218 (RGIQPGTGVH…SSGSAEIEVR (191 aa)) is the GH11 domain. N-linked (GlcNAc...) asparagine glycosylation is present at Asn-89. The Nucleophile role is filled by Glu-113. Glu-205 serves as the catalytic Proton donor.

This sequence belongs to the glycosyl hydrolase 11 (cellulase G) family.

It localises to the secreted. It catalyses the reaction Endohydrolysis of (1-&gt;4)-beta-D-xylosidic linkages in xylans.. The protein operates within glycan degradation; xylan degradation. Its activity is regulated as follows. Retains an activity of 52.5% in the presence of 5 mM SDS. Its function is as follows. Endo-1,4-beta-xylanase involved in the hydrolysis of xylan, a major structural heterogeneous polysaccharide found in plant biomass representing the second most abundant polysaccharide in the biosphere, after cellulose. Is an alkali-tolerant enzyme, exhibiting 50.6% of activity at pH 9.0, and 26.9% even at pH 10.0. In Humicola insolens (Soft-rot fungus), this protein is Endo-1,4-beta-xylanase 11A.